Reading from the N-terminus, the 373-residue chain is Erythronate-4-phosphate dehydrogenase (373 aa).

Serine 45 and threonine 66 together coordinate substrate. Aspartate 146 and threonine 175 together coordinate NAD(+). Residue arginine 208 is part of the active site. Aspartate 232 provides a ligand contact to NAD(+). Glutamate 237 is a catalytic residue. Histidine 254 functions as the Proton donor in the catalytic mechanism. Glycine 257 serves as a coordination point for NAD(+). Tyrosine 258 provides a ligand contact to substrate.

It belongs to the D-isomer specific 2-hydroxyacid dehydrogenase family. PdxB subfamily. In terms of assembly, homodimer.

Its subcellular location is the cytoplasm. The enzyme catalyses 4-phospho-D-erythronate + NAD(+) = (R)-3-hydroxy-2-oxo-4-phosphooxybutanoate + NADH + H(+). Its pathway is cofactor biosynthesis; pyridoxine 5'-phosphate biosynthesis; pyridoxine 5'-phosphate from D-erythrose 4-phosphate: step 2/5. In terms of biological role, catalyzes the oxidation of erythronate-4-phosphate to 3-hydroxy-2-oxo-4-phosphonooxybutanoate. In Serratia proteamaculans (strain 568), this protein is Erythronate-4-phosphate dehydrogenase.